Consider the following 160-residue polypeptide: MSRRRRASKRVISPDSKYNSVLLARFINVIMRSGERSIAEKIVYGALNKAEARLGEGAMSIFNAALNNVMPQMEVRSRRIGGVTYQVPVEVKEDRAVSLALRWIFKAAAAARKRSNKMYMDCLCNELLEAYNKRGGAYKMREEKYKMAEANKAFSHFRFN.

The protein belongs to the universal ribosomal protein uS7 family. Part of the 30S ribosomal subunit. Contacts proteins S9 and S11.

One of the primary rRNA binding proteins, it binds directly to 16S rRNA where it nucleates assembly of the head domain of the 30S subunit. Is located at the subunit interface close to the decoding center, probably blocks exit of the E-site tRNA. The polypeptide is Small ribosomal subunit protein uS7 (Ehrlichia canis (strain Jake)).